We begin with the raw amino-acid sequence, 534 residues long: Peptide chain release factor 3 (534 aa).

A tr-type G domain is found at 9 to 278; sequence SRRRTFAIIS…FFVEHAPSPQ (270 aa). Residues 18–25, 86–90, and 140–143 contribute to the GTP site; these read SHPDAGKT, DTPGH, and NKLD.

The protein belongs to the TRAFAC class translation factor GTPase superfamily. Classic translation factor GTPase family. PrfC subfamily.

The protein resides in the cytoplasm. In terms of biological role, increases the formation of ribosomal termination complexes and stimulates activities of RF-1 and RF-2. It binds guanine nucleotides and has strong preference for UGA stop codons. It may interact directly with the ribosome. The stimulation of RF-1 and RF-2 is significantly reduced by GTP and GDP, but not by GMP. This Stenotrophomonas maltophilia (strain K279a) protein is Peptide chain release factor 3.